The primary structure comprises 404 residues: S-adenosylmethionine synthase (404 aa).

Residues 1–13 (MSQSRYFFTSESV) show a composition bias toward polar residues. A disordered region spans residues 1–21 (MSQSRYFFTSESVSEGHPDKV). H17 lines the ATP pocket. Residue D19 participates in Mg(2+) binding. E45 contributes to the K(+) binding site. L-methionine-binding residues include E58 and Q101. The interval 101 to 111 (QSPDINRGVDR) is flexible loop. ATP-binding positions include 172–174 (DAK), 245–246 (RF), D254, 260–261 (RK), A277, and K281. L-methionine is bound at residue D254. K285 provides a ligand contact to L-methionine.

Belongs to the AdoMet synthase family. Homotetramer; dimer of dimers. Mg(2+) serves as cofactor. Requires K(+) as cofactor.

It localises to the cytoplasm. It catalyses the reaction L-methionine + ATP + H2O = S-adenosyl-L-methionine + phosphate + diphosphate. It functions in the pathway amino-acid biosynthesis; S-adenosyl-L-methionine biosynthesis; S-adenosyl-L-methionine from L-methionine: step 1/1. Its function is as follows. Catalyzes the formation of S-adenosylmethionine (AdoMet) from methionine and ATP. The overall synthetic reaction is composed of two sequential steps, AdoMet formation and the subsequent tripolyphosphate hydrolysis which occurs prior to release of AdoMet from the enzyme. The chain is S-adenosylmethionine synthase from Chlorobium phaeobacteroides (strain DSM 266 / SMG 266 / 2430).